A 210-amino-acid polypeptide reads, in one-letter code: N-(5'-phosphoribosyl)anthranilate isomerase (210 aa).

Belongs to the TrpF family.

The enzyme catalyses N-(5-phospho-beta-D-ribosyl)anthranilate = 1-(2-carboxyphenylamino)-1-deoxy-D-ribulose 5-phosphate. The protein operates within amino-acid biosynthesis; L-tryptophan biosynthesis; L-tryptophan from chorismate: step 3/5. This Magnetococcus marinus (strain ATCC BAA-1437 / JCM 17883 / MC-1) protein is N-(5'-phosphoribosyl)anthranilate isomerase.